Here is a 341-residue protein sequence, read N- to C-terminus: uncharacterized protein (341 aa).

The chain crosses the membrane as a helical span at residues 315-337 (VAAWFSGIAGGTFLALKLVSLMM).

The protein resides in the cell membrane. This is an uncharacterized protein from Bacillus subtilis (strain 168).